The primary structure comprises 212 residues: B3 domain-containing protein Os04g0386900 (212 aa).

The segment at 1–78 (MRAATALPSI…PRPPEPEPEK (78 aa)) is disordered. Composition is skewed to low complexity over residues 8–23 (PSIP…ASDP) and 36–46 (DAGAEDPAAVD). The segment at residues 93–191 (FTCIMCKSHV…EFRVQVLRAE (99 aa)) is a DNA-binding region (TF-B3).

The protein resides in the nucleus. This chain is B3 domain-containing protein Os04g0386900, found in Oryza sativa subsp. japonica (Rice).